A 500-amino-acid polypeptide reads, in one-letter code: Cytochrome P450 11B2, mitochondrial (500 aa).

Residues 1 to 24 (MALRAKADVWLARPWQCLPRTRAL) constitute a mitochondrion transit peptide. Phenylalanine 381 contributes to the 21-hydroxyprogesterone binding site. Heme is bound at residue cysteine 447.

It belongs to the cytochrome P450 family. Heme is required as a cofactor. Adrenal gland.

It localises to the mitochondrion inner membrane. The enzyme catalyses a steroid + 2 reduced [adrenodoxin] + O2 + 2 H(+) = an 11beta-hydroxysteroid + 2 oxidized [adrenodoxin] + H2O. It catalyses the reaction 21-hydroxyprogesterone + 2 reduced [adrenodoxin] + O2 + 2 H(+) = corticosterone + 2 oxidized [adrenodoxin] + H2O. It carries out the reaction corticosterone + 2 reduced [adrenodoxin] + O2 + 2 H(+) = 18-hydroxycorticosterone + 2 oxidized [adrenodoxin] + H2O. The catalysed reaction is 18-hydroxycorticosterone + 2 reduced [adrenodoxin] + O2 + 2 H(+) = aldosterone + 2 oxidized [adrenodoxin] + 2 H2O. The enzyme catalyses 11-deoxycortisol + 2 reduced [adrenodoxin] + O2 + 2 H(+) = cortisol + 2 oxidized [adrenodoxin] + H2O. It catalyses the reaction 21-hydroxyprogesterone + 2 reduced [adrenodoxin] + O2 + 2 H(+) = 18-hydroxy-11-deoxycorticosterone + 2 oxidized [adrenodoxin] + H2O. It carries out the reaction cortisol + 2 reduced [adrenodoxin] + O2 + 2 H(+) = 18-hydroxycortisol + 2 oxidized [adrenodoxin] + H2O. The catalysed reaction is 18-hydroxycortisol + 2 reduced [adrenodoxin] + O2 + 2 H(+) = 18-oxocortisol + 2 oxidized [adrenodoxin] + 2 H2O. The protein operates within steroid biosynthesis. In terms of biological role, a cytochrome P450 monooxygenase that catalyzes the biosynthesis of aldosterone, the main mineralocorticoid in the human body responsible for salt and water homeostasis, thus involved in blood pressure regulation, arterial hypertension, and the development of heart failure. Catalyzes three sequential oxidative reactions of 11-deoxycorticosterone (21-hydroxyprogesterone), namely 11-beta hydroxylation, followed by two successive oxidations at C18 yielding 18-hydroxy and then 18-oxo intermediates (that would not leave the enzyme active site during the consecutive hydroxylation reactions), ending with the formation of aldosterone. Can also produce 18-hydroxycortisol and 18-oxocortisol, derived from successive oxidations of cortisol at C18, normally found at very low levels, but significantly increased in primary aldosteronism, the most common form of secondary hypertension. Mechanistically, uses molecular oxygen inserting one oxygen atom into a substrate and reducing the second into a water molecule. Two electrons are provided by NADPH via a two-protein mitochondrial transfer system comprising flavoprotein FDXR (adrenodoxin/ferredoxin reductase) and nonheme iron-sulfur protein FDX1 or FDX2 (adrenodoxin/ferredoxin). Could also be involved in the androgen metabolic pathway. This is Cytochrome P450 11B2, mitochondrial (CYP11B2) from Mesocricetus auratus (Golden hamster).